The following is a 243-amino-acid chain: Chalcone--flavanone isomerase (243 aa).

Positions 50, 115, and 192 each coordinate substrate.

Belongs to the chalcone isomerase family.

It catalyses the reaction a chalcone = a flavanone.. Its pathway is secondary metabolite biosynthesis; flavonoid biosynthesis. Its function is as follows. Catalyzes the intramolecular cyclization of bicyclic chalcones into tricyclic (S)-flavanones. Responsible for the isomerization of 4,2',4',6'-tetrahydroxychalcone (also termed chalcone) into naringenin. The chain is Chalcone--flavanone isomerase (CHI) from Ipomoea batatas (Sweet potato).